Consider the following 85-residue polypeptide: Translation initiation factor IF-1 2 (85 aa).

The 72-residue stretch at 1–72 (MAKEELIEMH…SKGRITFRHI (72 aa)) folds into the S1-like domain.

It belongs to the IF-1 family. In terms of assembly, component of the 30S ribosomal translation pre-initiation complex which assembles on the 30S ribosome in the order IF-2 and IF-3, IF-1 and N-formylmethionyl-tRNA(fMet); mRNA recruitment can occur at any time during PIC assembly.

It is found in the cytoplasm. Its function is as follows. One of the essential components for the initiation of protein synthesis. Stabilizes the binding of IF-2 and IF-3 on the 30S subunit to which N-formylmethionyl-tRNA(fMet) subsequently binds. Helps modulate mRNA selection, yielding the 30S pre-initiation complex (PIC). Upon addition of the 50S ribosomal subunit IF-1, IF-2 and IF-3 are released leaving the mature 70S translation initiation complex. This chain is Translation initiation factor IF-1 2, found in Polaromonas sp. (strain JS666 / ATCC BAA-500).